The sequence spans 520 residues: Developmental regulatory protein wetA (520 aa).

Disordered stretches follow at residues 110–149 (ATHALSTSPSTPPATPRRKPTQSALITPKSIRHRCPNERR), 260–294 (HPSSSTLTNSSPSSADDMFSSSHSSDPHSLSSWQS), 388–453 (TTSQ…GSNK), and 471–496 (LTGVAPSGSSKTKARREQEARDRRRK). A compositionally biased stretch (low complexity) spans 261–294 (PSSSTLTNSSPSSADDMFSSSHSSDPHSLSSWQS). Positions 388 to 401 (TTSQVHNVSRSPSL) are enriched in polar residues. A compositionally biased stretch (basic residues) spans 420-429 (PVHRRTHSRK). Residues 436-453 (NAPKPAKASGSSSRGSNK) are compositionally biased toward low complexity.

This sequence belongs to the wetA family.

BrlA, abaA and wetA are pivotal regulators of conidiophore development and conidium maturation. They act individually and together to regulate their own expression and that of numerous other sporulation-specific genes. Plays a crucial role in pigmentation and conidial cell wall integrity. The chain is Developmental regulatory protein wetA from Penicillium digitatum (strain PHI26 / CECT 20796) (Green mold).